Reading from the N-terminus, the 420-residue chain is Pregnancy-associated glycoprotein 2 (420 aa).

The N-terminal stretch at 1-15 (MKWLVILGLVALSDC) is a signal peptide. 2 N-linked (GlcNAc...) asparagine glycosylation sites follow: asparagine 56 and asparagine 79. The region spanning 76-417 (YVGNISIGTP…DEGQNRIGLA (342 aa)) is the Peptidase A1 domain. Aspartate 94 is an active-site residue. Intrachain disulfides connect cysteine 107–cysteine 112 and cysteine 268–cysteine 272. The active site involves aspartate 277. The cysteines at positions 341 and 376 are disulfide-linked.

It belongs to the peptidase A1 family. As to expression, expressed throughout the chorion, with the signal localized exclusively over the trophectoderm.

It is found in the secreted. The protein localises to the extracellular space. The protein is Pregnancy-associated glycoprotein 2 (PAG2) of Sus scrofa (Pig).